The following is a 1176-amino-acid chain: MTSSGKVRIYELSKDLGLENKDVLDAAEKLSIAAKSHSSSISDSEAGKIRSLLGKGASPSQPTAPAAKPAPAKPAAGKSILSVKKAPASPGVTAPVAAAKPQAPAQPAASKPLQPSVKAVAPPARPAPAGSTSAGSTPNKPATAPARPTAATTTSTPRPAAAAAPSRPAPSKPQGAPKPQVVGKPSAPELVSKPTPATKPTGAAKPAIVSKPITAAKPAVVAKPAAAKPTIVKPTAPTPRPASSPAAASSAPPPASTPRPAPSRPTPRPAAAPSRPGAPQGQKPQIVSRAGAPPRPGTPPRVGAPTKTGTPARPTPRPELVGKPVPRRTGGVGAPQRPGTGVPQRQGGPARPGAPTRTGKPGAPTRPGGNTLELVGKPIRRDGSSASGRPGAPTRPGAPTRPGMPGGMRKPVAPGELMQLQKPISRPAAPAPRRPDAPNRPTEAAGTATPPVARPTAPSAPRRPGFRPGAPGGQRRPGRPDWDDSAKLEALRSRSPQKQRQKVHIIGENDDALAAQTGGFAGEQQAMVLSASLARPAKPKAQQRTAPKPVAAVRKRRKETARQRQRRRAMELRAAREAKQVRPEMIVVPEDNLTVQELADMLSIESSEIIKSLFFKGVIATVTQTLDMPTIEAVAKEFDVPVLQDDVEEAAKKTVEMIEEADLKHLIRRPPVVTVMGHVDHGKTSLLDAIRQARVAAGEAGGITQHIGAYQVEIQHKDEARKLTFLDTPGHAAFTAMRARGTKVTDVAVLVVAADDGVRPQTLEAISHARAAEVPIVVAINKIDKEGASADRVKQELSEQNLLAEEWGGDVVMVPVSAIKGENIDKLLEMLLLVTEVEDLQANPDRPARGTVIEAHLDKAKGPVATLLIQNGTLKTGDVLAAGPVLGKVRAMVDDNRQRLKEAGPSFAVEALGFSEVPTAGDEFEVYPDEKAARAVVGDRASNARATRLAQQMASRRVSLTAMSGQANEGELKELNLILKADVQGSVEAILGSLEQLPKDEVQVRVLLSAPGEITETDVDLAAASGAVIIGFNTSMASGAKKAADATGVDVRDYDVIYKLLEDIQLAMEGLLEPELIEEALGEAEVRAVFTIGKSAVAGCYVNTGKLHRNCRVRVHRGKQVVYTGDLDSLRRNKDDVKEVATGFECGVGADRFANWEEGDRIEAFKMVTQRRKLTT.

4 stretches are compositionally biased toward low complexity: residues 32-44 (IAAK…ISDS), 57-79 (ASPS…AGKS), 94-166 (APVA…AAPS), and 193-235 (KPTP…VKPT). Disordered regions lie at residues 32-502 (IAAK…QRQK) and 535-567 (RPAK…RQRR). Over residues 251-270 (APPPASTPRPAPSRPTPRPA) the composition is skewed to pro residues. Low complexity-rich tracts occupy residues 388 to 409 (GRPG…GGMR) and 439 to 469 (NRPT…FRPG). Over residues 478-492 (GRPDWDDSAKLEALR) the composition is skewed to basic and acidic residues. Residues 553–567 (VRKRRKETARQRQRR) show a composition bias toward basic residues. In terms of domain architecture, tr-type G spans 668–840 (RRPPVVTVMG…LLLVTEVEDL (173 aa)). Residues 677–684 (GHVDHGKT) form a G1 region. 677 to 684 (GHVDHGKT) contributes to the GTP binding site. The segment at 702-706 (GITQH) is G2. Residues 727–730 (DTPG) form a G3 region. GTP is bound by residues 727–731 (DTPGH) and 781–784 (NKID). A G4 region spans residues 781-784 (NKID). The G5 stretch occupies residues 817–819 (SAI).

Belongs to the TRAFAC class translation factor GTPase superfamily. Classic translation factor GTPase family. IF-2 subfamily.

The protein resides in the cytoplasm. One of the essential components for the initiation of protein synthesis. Protects formylmethionyl-tRNA from spontaneous hydrolysis and promotes its binding to the 30S ribosomal subunits. Also involved in the hydrolysis of GTP during the formation of the 70S ribosomal complex. The polypeptide is Translation initiation factor IF-2 (Synechococcus sp. (strain CC9902)).